We begin with the raw amino-acid sequence, 225 residues long: Uridylate kinase (225 aa).

9-10 (GS) serves as a coordination point for ATP. Gly-44 is a UMP binding site. Gly-45 and Arg-49 together coordinate ATP. UMP is bound by residues Asp-66 and 114–120 (THPGHTT). Thr-140, Asn-141, Tyr-146, and Asp-149 together coordinate ATP.

The protein belongs to the UMP kinase family. In terms of assembly, homohexamer.

Its subcellular location is the cytoplasm. The catalysed reaction is UMP + ATP = UDP + ADP. It participates in pyrimidine metabolism; CTP biosynthesis via de novo pathway; UDP from UMP (UMPK route): step 1/1. Inhibited by UTP. Functionally, catalyzes the reversible phosphorylation of UMP to UDP. This is Uridylate kinase from Thermococcus sibiricus (strain DSM 12597 / MM 739).